The following is a 229-amino-acid chain: Sorting nexin-10A (229 aa).

A PX domain is found at 11–128 (FISVWVRDPQ…HLFLQSQLSI (118 aa)). A 1,2-diacyl-sn-glycero-3-phospho-(1D-myo-inositol-3-phosphate) contacts are provided by arginine 54 and arginine 95.

It belongs to the sorting nexin family.

The protein localises to the cytoplasm. It localises to the endosome membrane. Its subcellular location is the cytoskeleton. The protein resides in the microtubule organizing center. It is found in the centrosome. Its function is as follows. Probable phosphoinositide-binding protein involved in protein sorting and membrane trafficking in endosomes. May play a role in cilium biogenesis through regulation of the transport and the localization of proteins to the cilium. In Danio rerio (Zebrafish), this protein is Sorting nexin-10A (snx10a).